The sequence spans 362 residues: 3-isopropylmalate dehydrogenase (362 aa).

78–91 serves as a coordination point for NAD(+); that stretch reads GPQWDTLPSDKRPE. Residues R98, R108, R136, and D226 each coordinate substrate. Mg(2+)-binding residues include D226, D250, and D254. 284–296 provides a ligand contact to NAD(+); the sequence is GSAPDIAGQDKAN.

It belongs to the isocitrate and isopropylmalate dehydrogenases family. LeuB type 1 subfamily. As to quaternary structure, homodimer. Mg(2+) serves as cofactor. Mn(2+) is required as a cofactor.

It is found in the cytoplasm. The catalysed reaction is (2R,3S)-3-isopropylmalate + NAD(+) = 4-methyl-2-oxopentanoate + CO2 + NADH. It participates in amino-acid biosynthesis; L-leucine biosynthesis; L-leucine from 3-methyl-2-oxobutanoate: step 3/4. Its function is as follows. Catalyzes the oxidation of 3-carboxy-2-hydroxy-4-methylpentanoate (3-isopropylmalate) to 3-carboxy-4-methyl-2-oxopentanoate. The product decarboxylates to 4-methyl-2 oxopentanoate. This chain is 3-isopropylmalate dehydrogenase, found in Gloeobacter violaceus (strain ATCC 29082 / PCC 7421).